A 93-amino-acid chain; its full sequence is UPF0358 protein BLi01701/BL02974 (93 aa).

It belongs to the UPF0358 family.

This Bacillus licheniformis (strain ATCC 14580 / DSM 13 / JCM 2505 / CCUG 7422 / NBRC 12200 / NCIMB 9375 / NCTC 10341 / NRRL NRS-1264 / Gibson 46) protein is UPF0358 protein BLi01701/BL02974.